The primary structure comprises 138 residues: Superoxide dismutase [Mn] (138 aa).

His-1, His-49, Asp-133, and His-137 together coordinate Mn(2+).

Belongs to the iron/manganese superoxide dismutase family. Mn(2+) serves as cofactor.

The enzyme catalyses 2 superoxide + 2 H(+) = H2O2 + O2. Destroys superoxide anion radicals which are normally produced within the cells and which are toxic to biological systems. In Mycobacterium celatum, this protein is Superoxide dismutase [Mn] (sodA).